The chain runs to 169 residues: Ubiquitin-conjugating enzyme E2 2 (169 aa).

Residues 4-150 form the UBC core domain; it reads AAKRRLIRDF…VKKTVELSWV (147 aa). Cys88 (glycyl thioester intermediate) is an active-site residue.

This sequence belongs to the ubiquitin-conjugating enzyme family.

Its subcellular location is the cytoplasm. It is found in the nucleus. The catalysed reaction is S-ubiquitinyl-[E1 ubiquitin-activating enzyme]-L-cysteine + [E2 ubiquitin-conjugating enzyme]-L-cysteine = [E1 ubiquitin-activating enzyme]-L-cysteine + S-ubiquitinyl-[E2 ubiquitin-conjugating enzyme]-L-cysteine.. It participates in protein modification; protein ubiquitination. Catalyzes the covalent attachment of ubiquitin to other proteins. Plays a role in transcription regulation by catalyzing the monoubiquitination of histone H2B to form H2BK123ub1. H2BK123ub1 gives a specific tag for epigenetic transcriptional activation and is also a prerequisite for H3K4me and H3K79me formation. Also involved in postreplication repair of UV-damaged DNA, in N-end rule-dependent protein degradation and in sporulation. This Cryptococcus neoformans var. neoformans serotype D (strain B-3501A) (Filobasidiella neoformans) protein is Ubiquitin-conjugating enzyme E2 2 (UBC2).